We begin with the raw amino-acid sequence, 387 residues long: Mitogen-activated protein kinase homolog MMK1 (387 aa).

Residues 55 to 340 (KPPIMPIGKG…VEDALAHPYL (286 aa)) form the Protein kinase domain. ATP contacts are provided by residues 61 to 69 (IGKGAYGIV) and Lys84. Asp181 serves as the catalytic Proton acceptor. At Thr213 the chain carries Phosphothreonine. Residues 213 to 215 (TEY) carry the TXY motif. Position 215 is a phosphotyrosine (Tyr215).

The protein belongs to the protein kinase superfamily. CMGC Ser/Thr protein kinase family. MAP kinase subfamily. Requires Mg(2+) as cofactor. Post-translationally, dually phosphorylated on Thr-213 and Tyr-215, which activates the enzyme. Autophosphorylated. Roots and stems.

The catalysed reaction is L-seryl-[protein] + ATP = O-phospho-L-seryl-[protein] + ADP + H(+). The enzyme catalyses L-threonyl-[protein] + ATP = O-phospho-L-threonyl-[protein] + ADP + H(+). Its activity is regulated as follows. Activated by tyrosine and threonine phosphorylation. In terms of biological role, may play a role in the mitogenic induction of symbiotic root nodules on Alfalfa by Rhizobium signal molecules. The protein is Mitogen-activated protein kinase homolog MMK1 (MMK1) of Medicago sativa (Alfalfa).